A 122-amino-acid polypeptide reads, in one-letter code: Large ribosomal subunit protein uL14 (122 aa).

The protein belongs to the universal ribosomal protein uL14 family. Part of the 50S ribosomal subunit. Forms a cluster with proteins L3 and L19. In the 70S ribosome, L14 and L19 interact and together make contacts with the 16S rRNA in bridges B5 and B8.

In terms of biological role, binds to 23S rRNA. Forms part of two intersubunit bridges in the 70S ribosome. The chain is Large ribosomal subunit protein uL14 from Agrobacterium fabrum (strain C58 / ATCC 33970) (Agrobacterium tumefaciens (strain C58)).